Reading from the N-terminus, the 180-residue chain is Inner membrane assembly complex subunit 17 (180 aa).

A mitochondrion-targeting transit peptide spans 1–36; that stretch reads MMIRNQLYRKCIIGGGRSILNGWVINGTVPNIGLRY. Topologically, residues 37 to 105 are mitochondrial matrix; it reads LRSGIVTRSN…RKTQDIPIKR (69 aa). Residues 106–128 traverse the membrane as a helical segment; it reads FIRPTWMFLLMSSTFYLLGHYIW. Positions 129–163 form a coiled coil; it reads WKLEYDEVEKELDRQVTALEEELHNLIEEHRVHGE. The Mitochondrial intermembrane segment spans residues 129–180; it reads WKLEYDEVEKELDRQVTALEEELHNLIEEHRVHGENEAIKNKKHKHWYKFWS.

The protein belongs to the INA17 family. As to quaternary structure, component of the inner membrane assembly (INA) complex, composed of INA17 and INA22. Interacts with a subset of F(1)F(0)-ATP synthase subunits of the F(1)-domain and the peripheral stalk.

Its subcellular location is the mitochondrion inner membrane. Functionally, component of the INA complex (INAC) that promotes the biogenesis of mitochondrial F(1)F(0)-ATP synthase. INAC facilitates the assembly of the peripheral stalk and promotes the assembly of the catalytic F(1)-domain with the membrane-embedded F(0)-domain. In Vanderwaltozyma polyspora (strain ATCC 22028 / DSM 70294 / BCRC 21397 / CBS 2163 / NBRC 10782 / NRRL Y-8283 / UCD 57-17) (Kluyveromyces polysporus), this protein is Inner membrane assembly complex subunit 17.